Reading from the N-terminus, the 147-residue chain is Large ribosomal subunit protein uL15 (147 aa).

A disordered region spans residues 1-57; that stretch reads MKLHELKSAPKSRNHKAKVVGRGHGSGLGKTSGRGQKGQKARKSGRTRPGFEGGQTP. Over residues 10-21 the composition is skewed to basic residues; sequence PKSRNHKAKVVG. The segment covering 22–36 has biased composition (gly residues); that stretch reads RGHGSGLGKTSGRGQ. A compositionally biased stretch (basic residues) spans 37–46; that stretch reads KGQKARKSGR.

Belongs to the universal ribosomal protein uL15 family. In terms of assembly, part of the 50S ribosomal subunit.

Its function is as follows. Binds to the 23S rRNA. This Mycoplasmoides gallisepticum (strain R(low / passage 15 / clone 2)) (Mycoplasma gallisepticum) protein is Large ribosomal subunit protein uL15.